The primary structure comprises 307 residues: Coproporphyrin III ferrochelatase (307 aa).

Fe-coproporphyrin III contacts are provided by residues Tyr-12, Arg-29, 45–46 (RY), Ser-53, and Tyr-124. 2 residues coordinate Fe(2+): His-181 and Glu-263.

The protein belongs to the ferrochelatase family.

The protein localises to the cytoplasm. It catalyses the reaction Fe-coproporphyrin III + 2 H(+) = coproporphyrin III + Fe(2+). Its pathway is porphyrin-containing compound metabolism; protoheme biosynthesis. Its function is as follows. Involved in coproporphyrin-dependent heme b biosynthesis. Catalyzes the insertion of ferrous iron into coproporphyrin III to form Fe-coproporphyrin III. The sequence is that of Coproporphyrin III ferrochelatase from Staphylococcus aureus (strain MRSA252).